The chain runs to 466 residues: Exodeoxyribonuclease 7 large subunit (466 aa).

This sequence belongs to the XseA family. Heterooligomer composed of large and small subunits.

The protein localises to the cytoplasm. The catalysed reaction is Exonucleolytic cleavage in either 5'- to 3'- or 3'- to 5'-direction to yield nucleoside 5'-phosphates.. Functionally, bidirectionally degrades single-stranded DNA into large acid-insoluble oligonucleotides, which are then degraded further into small acid-soluble oligonucleotides. The chain is Exodeoxyribonuclease 7 large subunit from Ruthia magnifica subsp. Calyptogena magnifica.